A 689-amino-acid chain; its full sequence is Elongation factor G (689 aa).

The region spanning 8-283 is the tr-type G domain; sequence SKCRNIGIMA…AVVDFLPAPN (276 aa). Residues 17–24, 81–85, and 135–138 contribute to the GTP site; these read AHIDAGKT, DTPGH, and NKMD.

Belongs to the TRAFAC class translation factor GTPase superfamily. Classic translation factor GTPase family. EF-G/EF-2 subfamily.

It localises to the cytoplasm. Functionally, catalyzes the GTP-dependent ribosomal translocation step during translation elongation. During this step, the ribosome changes from the pre-translocational (PRE) to the post-translocational (POST) state as the newly formed A-site-bound peptidyl-tRNA and P-site-bound deacylated tRNA move to the P and E sites, respectively. Catalyzes the coordinated movement of the two tRNA molecules, the mRNA and conformational changes in the ribosome. In Ehrlichia ruminantium (strain Welgevonden), this protein is Elongation factor G.